A 118-amino-acid chain; its full sequence is Small ribosomal subunit protein uS13 (118 aa).

The tract at residues 94 to 118 is disordered; that stretch reads SLPVRGQRSKTNARTRKGPRKAIKK.

This sequence belongs to the universal ribosomal protein uS13 family. Part of the 30S ribosomal subunit. Forms a loose heterodimer with protein S19. Forms two bridges to the 50S subunit in the 70S ribosome.

Located at the top of the head of the 30S subunit, it contacts several helices of the 16S rRNA. In the 70S ribosome it contacts the 23S rRNA (bridge B1a) and protein L5 of the 50S subunit (bridge B1b), connecting the 2 subunits; these bridges are implicated in subunit movement. Contacts the tRNAs in the A and P-sites. This is Small ribosomal subunit protein uS13 from Psychromonas ingrahamii (strain DSM 17664 / CCUG 51855 / 37).